A 151-amino-acid polypeptide reads, in one-letter code: Macrodomain Ter protein (151 aa).

Belongs to the MatP family. Homodimer.

The protein resides in the cytoplasm. Its function is as follows. Required for spatial organization of the terminus region of the chromosome (Ter macrodomain) during the cell cycle. Prevents early segregation of duplicated Ter macrodomains during cell division. Binds specifically to matS, which is a 13 bp signature motif repeated within the Ter macrodomain. In Cronobacter sakazakii (strain ATCC BAA-894) (Enterobacter sakazakii), this protein is Macrodomain Ter protein.